Reading from the N-terminus, the 317-residue chain is MKAWQELTITVHREAEEAVSNLLIEAGSQGVAINDTADYIGQEDRFGELYPAVEQSEMVTITAYYPSSADIDDIRQTINQGLNRLKQCDVELGELTLTNQELAEEDWADNWKAYYEPARITHDLTIVPSWTDYEATAGEKIIRLDPGMAFGTGTHPTTKLSLFALEQVLRGGETVIDVGTGSGVLSIASSLLGAKEVFAYDLDDVAVRVAKDNIALNQATDNIHVAAGDLLKGLTQEADVIVANILADILVHVTADAYRLIKSEGYLIMSGIISEKLDMVKQAALNAGFLLETHMLQGEWNALIFKKTDDLSGVIGG.

Threonine 158, glycine 179, aspartate 201, and asparagine 244 together coordinate S-adenosyl-L-methionine.

This sequence belongs to the methyltransferase superfamily. PrmA family.

The protein localises to the cytoplasm. It catalyses the reaction L-lysyl-[protein] + 3 S-adenosyl-L-methionine = N(6),N(6),N(6)-trimethyl-L-lysyl-[protein] + 3 S-adenosyl-L-homocysteine + 3 H(+). Its function is as follows. Methylates ribosomal protein L11. In Streptococcus equi subsp. equi (strain 4047), this protein is Ribosomal protein L11 methyltransferase.